The following is a 71-amino-acid chain: Long neurotoxin Tx-NM3-1 (71 aa).

Disulfide bonds link Cys-3/Cys-20, Cys-14/Cys-41, Cys-26/Cys-30, Cys-45/Cys-56, and Cys-57/Cys-62.

As to expression, expressed by the venom gland.

It localises to the secreted. Binds with high affinity to muscular (alpha-1-beta-1-gamma-delta/CHRNA1-CHRNB1-CHRNG-CHRND) and neuronal (alpha-7/CHRNA7) nicotinic acetylcholine receptor (nAChR) and inhibits acetylcholine from binding to the receptor, thereby impairing neuromuscular and neuronal transmission. Ranges of nAChR inhibition are in nanomolar (competitive binding with alpha-bungarotoxin gives Ki=1.66 nM on muscle nAChR and Ki=4.84 nM on alpha-7). Also shows moderate inhibition on GABA(A) alpha-1-beta-3-gamma-2 receptor (GABRA1-GABRB3-GABRG2) (IC(50)=0.68 uM), and a lower inhibition on alpha-1-beta-2-gamma-2 (GABRA1-GABRB2-GABRG2) and alpha-3-beta-2-gamma-2 (GABRA3-GABRB2-GABRG2). In Naja melanoleuca (Forest cobra), this protein is Long neurotoxin Tx-NM3-1.